We begin with the raw amino-acid sequence, 598 residues long: Elongation factor 4 (598 aa).

In terms of domain architecture, tr-type G spans 4–186 (KHIRNFSIIA…VIVRQIPPPE (183 aa)). GTP is bound by residues 16–21 (DHGKST) and 133–136 (NKID).

The protein belongs to the TRAFAC class translation factor GTPase superfamily. Classic translation factor GTPase family. LepA subfamily.

The protein localises to the cell inner membrane. The catalysed reaction is GTP + H2O = GDP + phosphate + H(+). Functionally, required for accurate and efficient protein synthesis under certain stress conditions. May act as a fidelity factor of the translation reaction, by catalyzing a one-codon backward translocation of tRNAs on improperly translocated ribosomes. Back-translocation proceeds from a post-translocation (POST) complex to a pre-translocation (PRE) complex, thus giving elongation factor G a second chance to translocate the tRNAs correctly. Binds to ribosomes in a GTP-dependent manner. This Pseudoalteromonas atlantica (strain T6c / ATCC BAA-1087) protein is Elongation factor 4.